The following is a 101-amino-acid chain: Small ribosomal subunit protein uS14 (101 aa).

This sequence belongs to the universal ribosomal protein uS14 family. In terms of assembly, part of the 30S ribosomal subunit. Contacts proteins S3 and S10.

Functionally, binds 16S rRNA, required for the assembly of 30S particles and may also be responsible for determining the conformation of the 16S rRNA at the A site. This Serratia proteamaculans (strain 568) protein is Small ribosomal subunit protein uS14.